The sequence spans 396 residues: NADH-quinone oxidoreductase subunit D (396 aa).

It belongs to the complex I 49 kDa subunit family. NDH-1 is composed of 14 different subunits. Subunits NuoB, C, D, E, F, and G constitute the peripheral sector of the complex.

The protein resides in the cell inner membrane. The catalysed reaction is a quinone + NADH + 5 H(+)(in) = a quinol + NAD(+) + 4 H(+)(out). NDH-1 shuttles electrons from NADH, via FMN and iron-sulfur (Fe-S) centers, to quinones in the respiratory chain. The immediate electron acceptor for the enzyme in this species is believed to be ubiquinone. Couples the redox reaction to proton translocation (for every two electrons transferred, four hydrogen ions are translocated across the cytoplasmic membrane), and thus conserves the redox energy in a proton gradient. The chain is NADH-quinone oxidoreductase subunit D from Bartonella bacilliformis (strain ATCC 35685 / KC583 / Herrer 020/F12,63).